A 174-amino-acid polypeptide reads, in one-letter code: tRNA (cytidine(56)-2'-O)-methyltransferase (174 aa).

S-adenosyl-L-methionine is bound by residues L83, 108-112 (GAEKV), and 126-133 (VGNQPHSE).

It belongs to the aTrm56 family. As to quaternary structure, homodimer.

Its subcellular location is the cytoplasm. It carries out the reaction cytidine(56) in tRNA + S-adenosyl-L-methionine = 2'-O-methylcytidine(56) in tRNA + S-adenosyl-L-homocysteine + H(+). Its function is as follows. Specifically catalyzes the AdoMet-dependent 2'-O-ribose methylation of cytidine at position 56 in tRNAs. The chain is tRNA (cytidine(56)-2'-O)-methyltransferase from Methanothrix thermoacetophila (strain DSM 6194 / JCM 14653 / NBRC 101360 / PT) (Methanosaeta thermophila).